Reading from the N-terminus, the 718-residue chain is Tegument protein UL46 (718 aa).

2 disordered regions span residues 433 to 510 and 581 to 611; these read SAGP…EPPA and TADDDDDDARRKATHAASARERHAPYEDDES. A compositionally biased stretch (gly residues) spans 444–454; that stretch reads GPGGHRAGGGT. Positions 455 to 467 are enriched in basic and acidic residues; the sequence is CREKIQRARRDNE.

Belongs to the herpesviridae HHV-1 VP11/12 protein family. As to quaternary structure, interacts with VP16. Interacts with host LCK, PIK3R1, SHC1 AND GRB2; these interactions promote the activation of the PI3K/AKT pathway. Interacts with host YWHAB. Interacts with ICP0; this interaction targets UL46 for degradation by the proteasome. Interacts (via N-terminus) with host TMEM173. Interacts (via C-terminus) with host TBK1. Interacts with host DOK2. Phosphorylated by host LCK. The phosphorylation seems to be lymphocyte-specific.

It is found in the virion tegument. The protein localises to the host cytoplasm. It localises to the host cell membrane. Plays a role in the activation of the host PI3K/AKT pathway to promote cell survival. Interacts with and activates host LCK and thereby recruits downstream partners SHC1, GRB2 and PI3KR1 in order to activate the PI3K pathway by phosphorylating host AKT on its activating residues. This mechanism is inhibited by the viral protein US3 that instead promotes incorporation of UL46 into virions. Plays a role in the inhibition of TMEM173/STING-mediated type I interferon production. Interacts with host DOK2 and induces its degradation. This immune evasion mechanism to inactivate T-cells may play an important role during pathogenesis. This is Tegument protein UL46 from Homo sapiens (Human).